We begin with the raw amino-acid sequence, 545 residues long: Dual specificity calcium/calmodulin-dependent 3',5'-cyclic nucleotide phosphodiesterase 1A (545 aa).

2 calmodulin-binding regions span residues 24–44 (TEKM…QLEK) and 114–137 (EKPK…MYRK). A PDEase domain is found at 142-522 (VGLTYPAAVI…ERWKELAAQG (381 aa)). Residue His219 is the Proton donor of the active site. Residues His223, His259, Asp260, and Asp366 each coordinate Zn(2+). Position 260 (Asp260) interacts with Mg(2+). The interval 526–545 (LHKNSEELGNTEEKHADTRP) is disordered.

Belongs to the cyclic nucleotide phosphodiesterase family. PDE1 subfamily. As to quaternary structure, homodimer. Interacts with YWHAZ. Zn(2+) is required as a cofactor. Requires Mg(2+) as cofactor. Expressed in brain, kidney and testis.

The protein resides in the cell projection. It localises to the cilium. It is found in the flagellum. The catalysed reaction is a nucleoside 3',5'-cyclic phosphate + H2O = a nucleoside 5'-phosphate + H(+). The enzyme catalyses 3',5'-cyclic GMP + H2O = GMP + H(+). It carries out the reaction 3',5'-cyclic AMP + H2O = AMP + H(+). Its activity is regulated as follows. Type I PDE are activated by the binding of calmodulin in the presence of Ca(2+). With respect to regulation, activated by the binding of calmodulin in the presence of Ca(2+). Functionally, calcium/calmodulin-dependent cyclic nucleotide phosphodiesterase with a dual specificity for the second messengers cGMP and cAMP, which are key regulators of many important physiological processes. Has a higher efficiency with cGMP compared to cAMP. In Mus musculus (Mouse), this protein is Dual specificity calcium/calmodulin-dependent 3',5'-cyclic nucleotide phosphodiesterase 1A.